The sequence spans 229 residues: UPF0441 protein YE3666 (229 aa).

Disordered regions lie at residues Pro101 to Gly125 and Lys190 to Gly229. 2 stretches are compositionally biased toward low complexity: residues Thr109 to Ala120 and Arg214 to Gly229.

The protein belongs to the UPF0441 family.

The protein is UPF0441 protein YE3666 of Yersinia enterocolitica serotype O:8 / biotype 1B (strain NCTC 13174 / 8081).